We begin with the raw amino-acid sequence, 297 residues long: MAESKAKNMFQKLSLTPKRNHEHDAGRNIETEEELLQKLKRLKLDNDYLHMWLSYEKLATIVENRSTDKTRKPEYGKLIFYYQGAAHALVSIWKRDSDLPFEQYISGDIARLFNKALDVAIRHMDPTVVHTIARDGGVALMSIDKPIEARDVLVRGENHLVAVPADGQLDFLERLIVLYYIMDSILIEERWNEYMVYTDKVWMMTMKEDKRCPLLENIIKEVEQVAVLLLVFQRKVECSERHKQLLASYRLDDWKAPIIKHNPPLSSLNPSEQKVFRRFLFYMMSNKRSVDKVLKHR.

Residues 1–29 (MAESKAKNMFQKLSLTPKRNHEHDAGRNI) are disordered. A compositionally biased stretch (basic and acidic residues) spans 19-29 (RNHEHDAGRNI).

This is an uncharacterized protein from Caenorhabditis elegans.